We begin with the raw amino-acid sequence, 199 residues long: LIM domain-containing protein WLIM2b (199 aa).

2 LIM zinc-binding domains span residues 8–68 and 106–166; these read QKCK…LFKE and EKCA…LFKE.

As to quaternary structure, interacts with F-actin. As to expression, expressed in roots, leaves, stems, flowers and siliques. Barely detected in pollen.

It is found in the cytoplasm. The protein resides in the cytoskeleton. Functionally, binds to actin filaments and promotes cross-linking into thick bundles. Has an actin-stabilizing activity. The actin regulatory activities are not regulated by pH and [Ca(2+)]. The sequence is that of LIM domain-containing protein WLIM2b from Arabidopsis thaliana (Mouse-ear cress).